The primary structure comprises 96 residues: Putative translation initiation factor IF-1, chloroplastic (96 aa).

Residues isoleucine 18 to histidine 57 enclose the S1-like domain.

Belongs to the IF-1 family. As to quaternary structure, component of the 30S ribosomal translation pre-initiation complex which assembles on the 30S ribosome in the order IF-2 and IF-3, IF-1 and N-formylmethionyl-tRNA(fMet); mRNA recruitment can occur at any time during PIC assembly.

It is found in the plastid. The protein resides in the chloroplast. Its function is as follows. One of the essential components for the initiation of protein synthesis. Stabilizes the binding of IF-2 and IF-3 on the 30S subunit to which N-formylmethionyl-tRNA(fMet) subsequently binds. Helps modulate mRNA selection, yielding the 30S pre-initiation complex (PIC). Upon addition of the 50S ribosomal subunit IF-1, IF-2 and IF-3 are released leaving the mature 70S translation initiation complex. This is Putative translation initiation factor IF-1, chloroplastic (infA) from Nicotiana tabacum (Common tobacco).